The chain runs to 615 residues: Hypermethylated in cancer 2 protein (615 aa).

A BTB domain is found at 46–109 (CDVIIMVENS…IYTGKLLPSD (64 aa)). The tract at residues 144–167 (KPFGSGRAGSTGMGRPPRSQRLST) is disordered. A phosphoserine mark is found at serine 166, serine 169, and serine 197. Disordered stretches follow at residues 182–208 (RKGAHAPQELPQAKGSDDELFLGGSNQ) and 229–421 (GCSS…SGHA). A binding to CtBP region spans residues 246 to 250 (GLDLS). The segment covering 280-296 (SPPAASAPPVANSASYS) has biased composition (low complexity). A compositionally biased stretch (basic and acidic residues) spans 336 to 356 (KKEWGKKEPVAGSPFERREAG). At serine 348 the chain carries Phosphoserine. A compositionally biased stretch (low complexity) spans 379 to 388 (ASGAGPSGPY). Phosphoserine is present on serine 412. 5 consecutive C2H2-type zinc fingers follow at residues 442 to 469 (YVCIPCAKGFPSSEQLNAHVETHTEEEL), 505 to 532 (FKCSVCEKTYKDPATLRQHEKTHWLTRP), 533 to 560 (FPCNICGKMFTQRGTMTRHMRSHLGLKP), 561 to 588 (FACDECGMRFTRQYRLTEHMRVHSGEKP), and 589 to 615 (YECQLCGGKFTQQRNLISHLRMHTSPS).

It belongs to the krueppel C2H2-type zinc-finger protein family. Hic subfamily. As to quaternary structure, self-associates. Interacts with HIC1. Highest levels in cerebellum.

The protein resides in the nucleus. Its function is as follows. Transcriptional repressor. This is Hypermethylated in cancer 2 protein (HIC2) from Homo sapiens (Human).